Here is a 1183-residue protein sequence, read N- to C-terminus: Phospholipid-transporting ATPase FetA (1183 aa).

3 helical membrane passes run 96–116, 299–319, and 348–368; these read ISSLAWYTTVIPLIVVLSITG, VLVVWIFMFLGGMCFLLSIGH, and ALIFWSYFIVLNTMVPISLYV. Asp416 (4-aspartylphosphate intermediate) is an active-site residue. ATP-binding residues include Asp416, Lys417, Thr418, Glu519, Phe560, Lys583, Arg617, Thr697, Gly698, Asp699, Arg812, and Lys818. A Mg(2+)-binding site is contributed by Asp416. Residue Thr418 coordinates Mg(2+). Asp838 serves as a coordination point for Mg(2+). Positions 841 and 842 each coordinate ATP. A Mg(2+)-binding site is contributed by Asp842. Helical transmembrane passes span 904-924, 927-947, 981-1001, 1014-1034, 1049-1069, and 1090-1110; these read FAFTLVHFWYAFFNGFSAQTV, IWFITFYNLIYTSLPVLGLSL, CLLHGIYNSFVLFFVPMGTVF, FQSFSLLVQTTLIGVMTMQIA, WGSLGLYFCILILLCSDGLCL, and IWLCLILSTILCMIPLIGYNF.

This sequence belongs to the cation transport ATPase (P-type) (TC 3.A.3) family. Type IV subfamily. It depends on Mg(2+) as a cofactor. In terms of tissue distribution, highly expressed in testis.

Its subcellular location is the cytoplasmic vesicle. It is found in the secretory vesicle. The protein resides in the acrosome membrane. It carries out the reaction ATP + H2O + phospholipidSide 1 = ADP + phosphate + phospholipidSide 2.. Its function is as follows. P4-ATPase flippase which catalyzes the hydrolysis of ATP coupled to the transport of aminophospholipids from the outer to the inner leaflet of various membranes and ensures the maintenance of asymmetric distribution of phospholipids. Phospholipid translocation also seems to be implicated in vesicle formation and in uptake of lipid signaling molecules. May play a role in phospholid transport across membranes and in acrosome formation. This Mus musculus (Mouse) protein is Phospholipid-transporting ATPase FetA (Atp8b5).